We begin with the raw amino-acid sequence, 167 residues long: HTH-type transcriptional repressor YetL (167 aa).

The region spanning 26–160 is the HTH marR-type domain; the sequence is SLELFLSLFD…FVKMLGDLFE (135 aa). The segment at residues 74–97 is a DNA-binding region (H-T-H motif); it reads PTELAKRSNVTKATITGLLDGLAR.

In terms of assembly, homodimer. The N- and C-terminal helices from both subunits stabilize YetL dimer via extensive intersubunit interactions.

Its activity is regulated as follows. Binding to the yetM cis sequence is clearly inhibited by kaempferol, morin, apigenin and luteolin, slightly inhibited by quercetin and galangin, but no inhibition is observed with the other flavonoids. Flavonoid binding may induce conformational changes and modulate interaction with DNA. Its function is as follows. Negatively regulates yetM expression and its own expression. Binds specifically to corresponding single sites in the divergent yetL and yetM promoter regions, with higher affinity to the yetM region. Recognizes a 28-mer operator of double-stranded DNA that contains a palindromic sequence. This is HTH-type transcriptional repressor YetL (yetL) from Bacillus subtilis (strain 168).